The primary structure comprises 364 residues: Endopolygalacturonase B (364 aa).

Residues 1 to 20 (MHFLQNSLIAAAMGAALVAA) form the signal peptide. Positions 21–29 (APAADLDAR) are excised as a propeptide. A disulfide bond links C32 and C47. N138 is a glycosylation site (N-linked (GlcNAc...) asparagine). PbH1 repeat units follow at residues 159–188 (SDHL…DIGS), 189–210 (STYI…AINS), 211–231 (GEHI…SIGS), 240–261 (VKSV…RIKT), 269–291 (VTDV…IVEQ), and 303–348 (TNGV…DITG). The active-site Proton donor is D203. A disulfide bridge links C205 with C221. The active site involves H225. Intrachain disulfides connect C331–C336 and C355–C364.

It belongs to the glycosyl hydrolase 28 family.

The protein localises to the secreted. The catalysed reaction is (1,4-alpha-D-galacturonosyl)n+m + H2O = (1,4-alpha-D-galacturonosyl)n + (1,4-alpha-D-galacturonosyl)m.. Involved in maceration and soft-rotting of plant tissue. Hydrolyzes the 1,4-alpha glycosidic bonds of de-esterified pectate in the smooth region of the plant cell wall. This chain is Endopolygalacturonase B (pgaB), found in Emericella nidulans (strain FGSC A4 / ATCC 38163 / CBS 112.46 / NRRL 194 / M139) (Aspergillus nidulans).